Consider the following 2646-residue polypeptide: Probable inactive serine/threonine-protein kinase roco10 (2646 aa).

Disordered stretches follow at residues 28–122, 138–168, 205–248, 281–457, 477–516, 605–656, and 882–907; these read LNYS…LSGG, NIPI…KDKD, PLFI…VSPS, QQQR…VKQA, MSKL…HTSP, TSPN…PHQY, and QSSS…STPS. Residues 46–56 show a composition bias toward polar residues; that stretch reads PQQNLLENDTL. 3 stretches are compositionally biased toward low complexity: residues 78–115, 147–161, and 215–228; these read IITT…TSPS, SPTS…NNNN, and SRNN…GGNK. A compositionally biased stretch (polar residues) spans 235-248; the sequence is KISSTSAAGDVSPS. Low complexity-rich tracts occupy residues 285-297 and 325-334; these read NGNN…NNNN and NNNNNNNNNN. Residues 335–345 show a composition bias toward polar residues; that stretch reads KQPQHPMNGNH. Residues 346-394 are compositionally biased toward low complexity; sequence SPSNGTSGSLSMSGSGIDNGGNNNNNSNTHGSSSNQSSGVTSPIIQSTS. Polar residues-rich tracts occupy residues 402 to 416 and 428 to 443; these read GLNS…SSPT and TSAS…PLMN. Composition is skewed to low complexity over residues 444 to 454, 491 to 516, 605 to 627, 634 to 651, and 883 to 907; these read STGVSSSSSGV, PSSP…HTSP, TSPN…NSSP, QQQQ…NTNT, and SSSS…STPS. Residues 585 to 807 form the Rho-GAP domain; that stretch reads SSISPISTAA…MFIQQADILF (223 aa). LRR repeat units follow at residues 968-987, 989-1011, 1012-1033, 1040-1061, 1062-1083, 1085-1108, 1109-1131, 1132-1154, 1155-1176, 1178-1199, 1201-1222, 1224-1247, 1248-1270, 1271-1298, and 1303-1327; these read QKLD…IKQL, DLQE…ARLT, SLRT…MADF, NLEN…YTWL, KLKT…IFQI, TLEV…CTST, KLRS…INLV, ELQV…QKLT, SLTE…LLLL, NLKK…IHRM, SLIE…IVAL, KLNS…YIQK, GKEG…YRTR, IIML…SFSS, and LPSL…ILDI. One can recognise a Roc domain in the interval 1262–1474; it reads TNVPCYRTRI…RDIKQMIAKN (213 aa). Disordered regions lie at residues 1293–1317, 1651–1670, and 1957–2026; these read KSSF…SNNS, NNNN…SRSM, and NNSS…KEKE. The span at 1651 to 1669 shows a compositional bias: low complexity; that stretch reads NNNNSNGNNVGRGRSGSRS. Positions 1966–1975 are enriched in polar residues; it reads PIASSRSNPK. Over residues 1983–1996 the composition is skewed to low complexity; that stretch reads NLIQSNNNDNNNSL. Positions 1997–2026 are enriched in basic and acidic residues; sequence SKKDLKELAKQNKEKEKEKEKDKDKEKEKE. Positions 2049-2342 constitute a Protein kinase domain; it reads FSICHFIKEI…PSKIISQLYT (294 aa). ATP is bound by residues 2055–2063 and Lys2094; that span reads IKEIDYREI. Positions 2412-2536 constitute an RGS domain; sequence MVVLNNKQST…FTVPTTNKNG (125 aa).

Belongs to the protein kinase superfamily. TKL Ser/Thr protein kinase family. ROCO subfamily.

This Dictyostelium discoideum (Social amoeba) protein is Probable inactive serine/threonine-protein kinase roco10 (roco10).